The sequence spans 1118 residues: MNALTVIPYAEFGIQSNFSFLRGASKPEELVVAAKLMGFSAIGLADRNTVAGVVRAWQQAKVEKLAYHPGCRLVFGDGTPDILAYPRNRAGWGHLCRMLTQANLRDETEKGATLLQRDDLLEWGDLMSLAVLPDLAAGAEDSLALLGQIKDRFGRALRLGVSPCYAGYDRFRIEQAAALAQVAGIPLMATNDVLYHTAERRPLQDVLTAIRLNTPVAEVGLELSANAERHLKPPLEMARLFRRHPQALAETLRFAEELTFSLSDLQYNYPDEPTESGLGPQAELERLAREGAARRYPSGVPHSVIKRIEEELALIERLNYARYFLTVYDIVKYARSQDILCQGRGSAANSIVCFCIGITEVGPDRIDTLFERFISEERNEPPDIDVDFEHEKRETVIQYIYEKYSSKRTALAAAVISYRGRSALREVSKAMGLSEDVRASLSGSIWGWSTSEVGEKEARAGGLDRSDPTSRHVMERANEIMGFPRHLSQHVGGFVITKDRLDEIVPIVKTAMDERKMVEWDKDDLDAVKILKVDVLALGMLTCLQRAFILLTDHYPKARDPYGQPYVLASLPPEDKRVYDMIGRADTLGVFQIESRAQMSMLPRLKPKDFYDLVIEVAIVRPGPIQGDMVHPYLRRRQGKEKPEYQKPELEAILSKTLGVPLFQEQAMKIAIVAGGFRPGEADELRRAMATFKRTGTIGNYRQRMIDGMVGKGYTKDFAERCFKQIEGFGEYGFPESHAASFALLVYASCWFKTFYPDVFCAAILNSQPMGFYQPAQLVRDARDHGVDIREVDVNCSAWDCTLEKVPFDPARILPRHADMRGVIETNHAVRLGFRQIKGLSKERMEDFAKRRGSGYETVRDVWLRSGLDVDEIERLAQADAFRSIGLDRRAALWEVRALGAKSAAEKLPLFDQPALRLRELEPETKLPKMPLGEHVIHDYRSLGLSLKAHPVAFLRERLDRAGVTPNANLPSQRDGRRVSVAGLVLVRQRPGKGNAIFLTLEDDKAVANVIFWERTFTRFRPIVMGARFVKVSGKLQSESGVIHIVAEKIEDLTPWLTVLLEKVSGAGAPGPQPMGYAKEVGSDRRSRPEIGNAPARQDLATLSEEAEQVMPKGRNFQ.

The tract at residues 1071–1118 (GPQPMGYAKEVGSDRRSRPEIGNAPARQDLATLSEEAEQVMPKGRNFQ) is disordered.

The protein belongs to the DNA polymerase type-C family. DnaE2 subfamily.

It localises to the cytoplasm. It catalyses the reaction DNA(n) + a 2'-deoxyribonucleoside 5'-triphosphate = DNA(n+1) + diphosphate. Its function is as follows. DNA polymerase involved in damage-induced mutagenesis and translesion synthesis (TLS). It is not the major replicative DNA polymerase. This Mesorhizobium japonicum (strain LMG 29417 / CECT 9101 / MAFF 303099) (Mesorhizobium loti (strain MAFF 303099)) protein is Error-prone DNA polymerase.